Here is a 244-residue protein sequence, read N- to C-terminus: Cell division protein ZapD (244 aa).

The protein belongs to the ZapD family. Interacts with FtsZ.

The protein resides in the cytoplasm. Functionally, cell division factor that enhances FtsZ-ring assembly. Directly interacts with FtsZ and promotes bundling of FtsZ protofilaments, with a reduction in FtsZ GTPase activity. The polypeptide is Cell division protein ZapD (Shewanella baltica (strain OS223)).